A 490-amino-acid polypeptide reads, in one-letter code: Katanin p60 ATPase-containing subunit A-like 1 (490 aa).

Position 1 is an N-acetylmethionine (Met-1). Positions 95 to 178 are disordered; the sequence is DPAVWPPPVP…MQDGASDGDI (84 aa). The span at 116-127 shows a compositional bias: basic and acidic residues; the sequence is PNREVRPLRKDV. Over residues 128–139 the composition is skewed to low complexity; that stretch reads AGVGARGPVGRA. The span at 143 to 169 shows a compositional bias: basic and acidic residues; the sequence is SKSEKPSTNKDKDYRARGRDDKGRKNM. Ser-174 is modified (phosphoserine). An ATP-binding site is contributed by 248 to 255; sequence GPPGTGKT.

It belongs to the AAA ATPase family. Katanin p60 subunit A1 subfamily. A-like 1 sub-subfamily. As to quaternary structure, interacts with KATNB1 and KATNBL1.

Its subcellular location is the cytoplasm. It is found in the cytoskeleton. It localises to the spindle pole. The protein resides in the spindle. It catalyses the reaction n ATP + n H2O + a microtubule = n ADP + n phosphate + (n+1) alpha/beta tubulin heterodimers.. Regulates microtubule dynamics in Sertoli cells, a process that is essential for spermiogenesis and male fertility. Severs microtubules in an ATP-dependent manner, promoting rapid reorganization of cellular microtubule arrays. Has microtubule-severing activity in vitro. This chain is Katanin p60 ATPase-containing subunit A-like 1, found in Sorex araneus (Eurasian common shrew).